A 357-amino-acid chain; its full sequence is Membrane-bound lytic murein transglycosylase C (357 aa).

The first 16 residues, 1–16 (MKKMLALLVIAPLLVS), serve as a signal peptide directing secretion. C17 is lipidated: N-palmitoyl cysteine. Residue C17 is the site of S-diacylglycerol cysteine attachment.

This sequence belongs to the transglycosylase Slt family.

The protein localises to the cell outer membrane. It catalyses the reaction Exolytic cleavage of the (1-&gt;4)-beta-glycosidic linkage between N-acetylmuramic acid (MurNAc) and N-acetylglucosamine (GlcNAc) residues in peptidoglycan, from either the reducing or the non-reducing ends of the peptidoglycan chains, with concomitant formation of a 1,6-anhydrobond in the MurNAc residue.. In terms of biological role, murein-degrading enzyme. May play a role in recycling of muropeptides during cell elongation and/or cell division. The chain is Membrane-bound lytic murein transglycosylase C from Pectobacterium atrosepticum (strain SCRI 1043 / ATCC BAA-672) (Erwinia carotovora subsp. atroseptica).